A 107-amino-acid chain; its full sequence is Thioredoxin (107 aa).

In terms of domain architecture, Thioredoxin spans 2 to 107 (PSPIQVTDFS…TLTNALKKYL (106 aa)). Residues cysteine 32 and cysteine 35 each act as nucleophile in the active site. A disulfide bridge connects residues cysteine 32 and cysteine 35.

This sequence belongs to the thioredoxin family.

The protein resides in the plastid. The protein localises to the chloroplast. Participates in various redox reactions through the reversible oxidation of its active center dithiol to a disulfide and catalyzes dithiol-disulfide exchange reactions. The chain is Thioredoxin (trxA) from Cyanidium caldarium (Red alga).